Here is a 602-residue protein sequence, read N- to C-terminus: Aspartate--tRNA(Asp/Asn) ligase (602 aa).

Glu176 lines the L-aspartate pocket. Residues 200–203 form an aspartate region; that stretch reads QQFK. Residues Arg222 and His452 each coordinate L-aspartate. 222 to 224 is an ATP binding site; it reads RDE. ATP is bound at residue Glu490. Arg497 provides a ligand contact to L-aspartate. 542–545 provides a ligand contact to ATP; that stretch reads GIDR.

It belongs to the class-II aminoacyl-tRNA synthetase family. Type 1 subfamily. As to quaternary structure, homodimer.

It is found in the cytoplasm. It catalyses the reaction tRNA(Asx) + L-aspartate + ATP = L-aspartyl-tRNA(Asx) + AMP + diphosphate. In terms of biological role, aspartyl-tRNA synthetase with relaxed tRNA specificity since it is able to aspartylate not only its cognate tRNA(Asp) but also tRNA(Asn). Reaction proceeds in two steps: L-aspartate is first activated by ATP to form Asp-AMP and then transferred to the acceptor end of tRNA(Asp/Asn). The polypeptide is Aspartate--tRNA(Asp/Asn) ligase (Rickettsia africae (strain ESF-5)).